The chain runs to 507 residues: ATP synthase subunit alpha, chloroplastic (507 aa).

Residue 170 to 177 coordinates ATP; that stretch reads GDRQTGKT.

It belongs to the ATPase alpha/beta chains family. F-type ATPases have 2 components, CF(1) - the catalytic core - and CF(0) - the membrane proton channel. CF(1) has five subunits: alpha(3), beta(3), gamma(1), delta(1), epsilon(1). CF(0) has four main subunits: a, b, b' and c.

The protein resides in the plastid. It is found in the chloroplast thylakoid membrane. The catalysed reaction is ATP + H2O + 4 H(+)(in) = ADP + phosphate + 5 H(+)(out). Functionally, produces ATP from ADP in the presence of a proton gradient across the membrane. The alpha chain is a regulatory subunit. This chain is ATP synthase subunit alpha, chloroplastic, found in Cycas taitungensis (Prince sago).